Consider the following 228-residue polypeptide: Ribose-5-phosphate isomerase A (228 aa).

Substrate-binding positions include 29–32 (TGST), 85–88 (DGAD), and 98–101 (KGGG). E107 (proton acceptor) is an active-site residue. K125 provides a ligand contact to substrate.

Belongs to the ribose 5-phosphate isomerase family. Homodimer.

The catalysed reaction is aldehydo-D-ribose 5-phosphate = D-ribulose 5-phosphate. The protein operates within carbohydrate degradation; pentose phosphate pathway; D-ribose 5-phosphate from D-ribulose 5-phosphate (non-oxidative stage): step 1/1. In terms of biological role, catalyzes the reversible conversion of ribose-5-phosphate to ribulose 5-phosphate. The sequence is that of Ribose-5-phosphate isomerase A from Staphylococcus aureus (strain Mu50 / ATCC 700699).